The following is a 259-amino-acid chain: Probable ABC transporter arginine-binding protein ArtJ (259 aa).

The first 25 residues, 1 to 25 (MIKQIGRFFRAFIFIMPLSLTSCES), serve as a signal peptide directing secretion. Residues Asn38, Glu45, Ala96, Gly97, Ser99, Arg104, and Phe149 each coordinate L-arginine.

It belongs to the bacterial solute-binding protein 3 family.

The protein resides in the secreted. Its subcellular location is the cell surface. Probably part of an ABC transporter complex involved in arginine transport. Binds arginine. Interacts with host epithelial cells, suggesting a role in host-cell adhesion during infection. The polypeptide is Probable ABC transporter arginine-binding protein ArtJ (Chlamydia pneumoniae (Chlamydophila pneumoniae)).